The chain runs to 192 residues: Xanthine phosphoribosyltransferase (192 aa).

Leu20 and Asn27 together coordinate xanthine. 128-132 (ANGQA) is a binding site for 5-phospho-alpha-D-ribose 1-diphosphate. Lys156 is a binding site for xanthine.

The protein belongs to the purine/pyrimidine phosphoribosyltransferase family. Xpt subfamily. Homodimer.

Its subcellular location is the cytoplasm. It catalyses the reaction XMP + diphosphate = xanthine + 5-phospho-alpha-D-ribose 1-diphosphate. It functions in the pathway purine metabolism; XMP biosynthesis via salvage pathway; XMP from xanthine: step 1/1. In terms of biological role, converts the preformed base xanthine, a product of nucleic acid breakdown, to xanthosine 5'-monophosphate (XMP), so it can be reused for RNA or DNA synthesis. This Listeria monocytogenes serotype 4b (strain CLIP80459) protein is Xanthine phosphoribosyltransferase.